The chain runs to 235 residues: Sugar fermentation stimulation protein homolog (235 aa).

The protein belongs to the SfsA family.

This is Sugar fermentation stimulation protein homolog from Pseudomonas aeruginosa (strain ATCC 15692 / DSM 22644 / CIP 104116 / JCM 14847 / LMG 12228 / 1C / PRS 101 / PAO1).